A 249-amino-acid chain; its full sequence is Diaminopimelate epimerase (249 aa).

Substrate is bound by residues Asn11 and Asn60. Cys69 (proton donor) is an active-site residue. Substrate contacts are provided by residues 70-71 (GN), Asn164, and 182-183 (ER). Residue Cys192 is the Proton acceptor of the active site. 193 to 194 (GT) contributes to the substrate binding site.

It belongs to the diaminopimelate epimerase family. In terms of assembly, homodimer.

It is found in the cytoplasm. It catalyses the reaction (2S,6S)-2,6-diaminopimelate = meso-2,6-diaminopimelate. It participates in amino-acid biosynthesis; L-lysine biosynthesis via DAP pathway; DL-2,6-diaminopimelate from LL-2,6-diaminopimelate: step 1/1. In terms of biological role, catalyzes the stereoinversion of LL-2,6-diaminopimelate (L,L-DAP) to meso-diaminopimelate (meso-DAP), a precursor of L-lysine and an essential component of the bacterial peptidoglycan. The sequence is that of Diaminopimelate epimerase from Campylobacter jejuni subsp. jejuni serotype O:23/36 (strain 81-176).